Consider the following 399-residue polypeptide: Phospholipase C (399 aa).

The first 28 residues, 1–28 (MNKKKILKFICSAVLSFTLFSGYKSYAW), serve as a signal peptide directing secretion. Residues Trp28, His38, Asp83, His95, His153, Asp157, His163, His175, and Glu179 each contribute to the Zn(2+) site. A Zn-dependent PLC domain is found at 29–277 (DGKVDGTGTH…NEVSGTINTT (249 aa)). Residues 275 to 282 (NTTENSKI) are linker. The region spanning 283 to 399 (NEIMVVIKTA…DNKTFYINNK (117 aa)) is the PLAT domain. Ca(2+) is bound by residues Gly298, Thr299, Asp300, Asp320, Asn321, Gly323, Asn324, Asp325, and Asp363.

Belongs to the bacterial zinc-metallophospholipase C family. Ca(2+) serves as cofactor. The cofactor is Zn(2+).

It localises to the secreted. The enzyme catalyses a 1,2-diacyl-sn-glycero-3-phosphocholine + H2O = phosphocholine + a 1,2-diacyl-sn-glycerol + H(+). Functionally, bacterial hemolysins are exotoxins that attack blood cell membranes and cause cell rupture. Binds to eukaryotic membranes where it hydrolyzes phosphatidylcholine, sphingomyelin and phosphatidylethanolamine. The diacylglycerol produced can activate both the arachidonic acid pathway, leading to modulation of the inflammatory response cascade and thrombosis, and protein kinase C, leading to activation of eukaryotic phospholipases and further membrane damage. This is Phospholipase C (plc) from Clostridium haemolyticum.